A 23-amino-acid polypeptide reads, in one-letter code: U1-poneritoxin-Da3b (23 aa).

The protein belongs to the non-disulfide-bridged peptide (NDBP) superfamily. Medium-length antimicrobial peptide (group 3) family. Ponericin-W subfamily. As to expression, expressed by the venom gland.

Its subcellular location is the secreted. It is found in the target cell membrane. May have antimicrobial properties, like most ant linear peptides. May act by disrupting the integrity of the bacterial cell membrane. The sequence is that of U1-poneritoxin-Da3b from Dinoponera australis (Giant neotropical hunting ant).